We begin with the raw amino-acid sequence, 369 residues long: MGSSLSLCYPSDKTFNINGVKYTVNRILGEGGFSFVYLVKDNSNSKKYALKVMICQTQESINTAKREINAFQTFNHENIMKLIDHSISNHSQDTKEYRLLLPYYKDGTLQDLIDNQRTIYGKDTKKPLFKEKKCLQFFLKVCEAIQVFHNHSPPLAHRDIKPGNIVLQNLRRPSNNNNNNNNNNNNNNNNNNNNNNNNNNNNNNNNNNNNNNNNNNNNNNNSEDSDIEAIPILMDFGSVREARIKIENRKDALSLQDEVEQNTTPFYRAPELFDIPSDCQIDERIDVWALGCLLYTMAYNNSPFEVCDNEPNGSVALKVLSGLPKPFPPSQTNYSNQFNQLIIDMVNLDKDERLHLNQVIERINQIIQS.

Residues 22–367 form the Protein kinase domain; it reads YTVNRILGEG…QVIERINQII (346 aa). ATP contacts are provided by residues 28-36 and Lys-51; that span reads LGEGGFSFV. The Proton acceptor role is filled by Asp-159. Residues 169–225 are disordered; the sequence is NLRRPSNNNNNNNNNNNNNNNNNNNNNNNNNNNNNNNNNNNNNNNNNNNNNNNSEDS. The segment covering 175–221 has biased composition (low complexity); it reads NNNNNNNNNNNNNNNNNNNNNNNNNNNNNNNNNNNNNNNNNNNNNNN.

It belongs to the protein kinase superfamily. Ser/Thr protein kinase family.

It carries out the reaction L-seryl-[protein] + ATP = O-phospho-L-seryl-[protein] + ADP + H(+). It catalyses the reaction L-threonyl-[protein] + ATP = O-phospho-L-threonyl-[protein] + ADP + H(+). The protein is Probable serine/threonine-protein kinase DDB_G0291350 of Dictyostelium discoideum (Social amoeba).